Reading from the N-terminus, the 425-residue chain is Exodeoxyribonuclease 7 large subunit (425 aa).

Belongs to the XseA family. In terms of assembly, heterooligomer composed of large and small subunits.

It localises to the cytoplasm. The enzyme catalyses Exonucleolytic cleavage in either 5'- to 3'- or 3'- to 5'-direction to yield nucleoside 5'-phosphates.. Functionally, bidirectionally degrades single-stranded DNA into large acid-insoluble oligonucleotides, which are then degraded further into small acid-soluble oligonucleotides. The sequence is that of Exodeoxyribonuclease 7 large subunit from Nocardia farcinica (strain IFM 10152).